Reading from the N-terminus, the 231-residue chain is Aldehyde decarbonylase (231 aa).

Residues glutamate 32, glutamate 60, histidine 63, glutamate 115, and histidine 147 each coordinate Fe cation.

The protein belongs to the aldehyde decarbonylase family. Requires Binds 2 metal cations per subunit. The catalytic dinuclear metal-binding site could be either a di-iron or a manganese-iron cofactor. as cofactor.

The enzyme catalyses a long-chain fatty aldehyde + 2 NADPH + O2 + H(+) = a long-chain alkane + formate + 2 NADP(+) + H2O. In terms of biological role, catalyzes the decarbonylation of fatty aldehydes to alkanes. Requires the presence of ferredoxin, ferredoxin reductase and NADPH for in vitro decarbonylase activity. Involved in the biosynthesis of alkanes, mainly heptadecane and pentadecane. The protein is Aldehyde decarbonylase of Synechococcus elongatus (strain ATCC 33912 / PCC 7942 / FACHB-805) (Anacystis nidulans R2).